Reading from the N-terminus, the 225-residue chain is Phosphoribosylformylglycinamidine synthase subunit PurQ (225 aa).

The Glutamine amidotransferase type-1 domain maps to 4–225 (RIGVITFPGT…LSVLDTLVTA (222 aa)). Catalysis depends on cysteine 87, which acts as the Nucleophile. Residues histidine 196 and glutamate 198 contribute to the active site.

Part of the FGAM synthase complex composed of 1 PurL, 1 PurQ and 2 PurS subunits.

The protein resides in the cytoplasm. The catalysed reaction is N(2)-formyl-N(1)-(5-phospho-beta-D-ribosyl)glycinamide + L-glutamine + ATP + H2O = 2-formamido-N(1)-(5-O-phospho-beta-D-ribosyl)acetamidine + L-glutamate + ADP + phosphate + H(+). It carries out the reaction L-glutamine + H2O = L-glutamate + NH4(+). It participates in purine metabolism; IMP biosynthesis via de novo pathway; 5-amino-1-(5-phospho-D-ribosyl)imidazole from N(2)-formyl-N(1)-(5-phospho-D-ribosyl)glycinamide: step 1/2. Its function is as follows. Part of the phosphoribosylformylglycinamidine synthase complex involved in the purines biosynthetic pathway. Catalyzes the ATP-dependent conversion of formylglycinamide ribonucleotide (FGAR) and glutamine to yield formylglycinamidine ribonucleotide (FGAM) and glutamate. The FGAM synthase complex is composed of three subunits. PurQ produces an ammonia molecule by converting glutamine to glutamate. PurL transfers the ammonia molecule to FGAR to form FGAM in an ATP-dependent manner. PurS interacts with PurQ and PurL and is thought to assist in the transfer of the ammonia molecule from PurQ to PurL. The chain is Phosphoribosylformylglycinamidine synthase subunit PurQ from Nocardia farcinica (strain IFM 10152).